The chain runs to 1501 residues: EF-hand calcium-binding domain-containing protein 6 (1501 aa).

The disordered stretch occupies residues 18-47 (RKFTHSRPHSSPCRVYSRNGSPNKFRSSST). The span at 35–47 (RNGSPNKFRSSST) shows a compositional bias: polar residues. EF-hand domains are found at residues 70–105 (DRGDELQKAFQLLDTGQNLTVSKSELRRIITDFLMP), 172–207 (KNIKTVMKAFELIDVNKTGLVRPQELRRVLETFCMK), 297–332 (KSYEKVEKALSAGDPCKGGYVSFNYLKIVLDTFVYQ), 403–438 (DHSASLKKALLIINTKPDGPITREEFRYILNCMAVK), 439–474 (LSDSEFKELMQMLDPGDTGVVNTSMFIDLIEENCRM), 504–539 (RNLQAFYNMLRSYDLGDTGRIGRNNFKKIMHVFCPF), and 634–669 (QQDPAFKKRFLDFSKEPNGKINVHDFKKVLEDTGMP). The tract at residues 699 to 718 (EDPPMRGPETTPPQPPTPSK) is disordered. 7 consecutive EF-hand domains span residues 741-776 (ESFRDPYSAFFKTDADRDGIINMHDLHRLLLHLLLN), 847-882 (NRWSDLSKNFLETDNEGNGILRRRDIKNALYGFDIP), 883-918 (LTPREFEKLWARYDTEGKGHITYQEFLQKLGINYSP), 964-999 (DRHQDISKAFTKTDQSKTNYISICKMQEVLEECGCS), 1069-1104 (SSQLALSTAFSALDKEDTGFVKATEFGQVLKDFCYK), 1176-1211 (SHYHAITQEFENFDTMKTNTISREEFRAICNRRVQI), and 1212-1247 (LTDEQFDRLWNEMPVNAKGRLKYPDFLSRFSSETAA). Asp-754, Asp-756, Asp-758, and Asp-765 together coordinate Ca(2+). Position 884 is a phosphothreonine (Thr-884). A disordered region spans residues 1246–1307 (AATPMATGDS…TTVIPGTPPL (62 aa)). Composition is skewed to polar residues over residues 1270–1279 (GTRSALSLPT) and 1286–1301 (SKSQSHPCTPASTTVI). Ser-1290 is subject to Phosphoserine. Phosphothreonine occurs at positions 1294 and 1304. Residues 1303–1501 (GTPPLQNCDP…YNDFLRAFLQ (199 aa)) form an interaction with PARK7 region. EF-hand domains follow at residues 1359–1394 (ISKEECQQLIIKYDLKSNGKFAYCDFIQSCVLLLKA), 1434–1469 (HCWRPMRRTFKSYDEAGTGLLSVADFRTVLRQYSIN), and 1470–1501 (LSEEEFFHILEYYDKTLSSKISYNDFLRAFLQ). The interaction with AR stretch occupies residues 1407-1501 (NAHKMKEAGA…YNDFLRAFLQ (95 aa)).

Microtubule inner protein component of sperm flagellar doublet microtubules. Binds PARK7. Part of a ternary complex containing PARK7, EFCAB6/DJBP and AR. In terms of tissue distribution, specifically expressed in the testis.

It localises to the nucleus. Its subcellular location is the cytoplasm. It is found in the cytoskeleton. The protein localises to the flagellum axoneme. Its function is as follows. Negatively regulates the androgen receptor by recruiting histone deacetylase complex, and protein DJ-1 antagonizes this inhibition by abrogation of this complex. Microtubule inner protein (MIP) part of the dynein-decorated doublet microtubules (DMTs) in cilia axoneme, which is required for motile cilia beating. This is EF-hand calcium-binding domain-containing protein 6 from Homo sapiens (Human).